The sequence spans 140 residues: Small ribosomal subunit protein uS11 (140 aa).

Residues 116–140 (GRVEDVTPIPHDGTRPKGGRRGRRV) form a disordered region.

The protein belongs to the universal ribosomal protein uS11 family. As to quaternary structure, part of the 30S ribosomal subunit.

Its function is as follows. Located on the platform of the 30S subunit. This Thermococcus kodakarensis (strain ATCC BAA-918 / JCM 12380 / KOD1) (Pyrococcus kodakaraensis (strain KOD1)) protein is Small ribosomal subunit protein uS11.